A 314-amino-acid polypeptide reads, in one-letter code: 2,3-dihydroxyphenylpropionate/2,3-dihydroxicinnamic acid 1,2-dioxygenase 1 (314 aa).

Histidine 115 functions as the Proton donor in the catalytic mechanism. The active-site Proton acceptor is histidine 179.

The protein belongs to the LigB/MhpB extradiol dioxygenase family. As to quaternary structure, homotetramer. It depends on Fe(2+) as a cofactor.

It carries out the reaction 3-(2,3-dihydroxyphenyl)propanoate + O2 = (2Z,4E)-2-hydroxy-6-oxonona-2,4-dienedioate + H(+). It catalyses the reaction (2E)-3-(2,3-dihydroxyphenyl)prop-2-enoate + O2 = (2Z,4E,7E)-2-hydroxy-6-oxonona-2,4,7-trienedioate + H(+). The protein operates within aromatic compound metabolism; 3-phenylpropanoate degradation. Catalyzes the non-heme iron(II)-dependent oxidative cleavage of 2,3-dihydroxyphenylpropionic acid and 2,3-dihydroxicinnamic acid into 2-hydroxy-6-ketononadienedioate and 2-hydroxy-6-ketononatrienedioate, respectively. This is 2,3-dihydroxyphenylpropionate/2,3-dihydroxicinnamic acid 1,2-dioxygenase 1 from Pseudomonas putida (Arthrobacter siderocapsulatus).